The sequence spans 391 residues: Casein kinase II subunit alpha 3 (391 aa).

A Protein kinase domain is found at 39–324 (YQLVRKLGRG…AREAMEHPYF (286 aa)). Residues 45-53 (LGRGKYSEV) and Lys-68 each bind ATP. The Proton acceptor role is filled by Asp-156.

The protein belongs to the protein kinase superfamily. Ser/Thr protein kinase family. CK2 subfamily. Heterotetramer composed of two catalytic subunits (alpha chain and/or alpha' chain) and two regulatory subunits (beta chains). Interacts with PML. In terms of tissue distribution, detected in blood platelets and megakaryocyte cell lines. Poorly expressed in lung. Highly expressed in lung tumor tissues.

The enzyme catalyses L-seryl-[protein] + ATP = O-phospho-L-seryl-[protein] + ADP + H(+). The catalysed reaction is L-threonyl-[protein] + ATP = O-phospho-L-threonyl-[protein] + ADP + H(+). Its function is as follows. Probable catalytic subunit of a constitutively active serine/threonine-protein kinase complex that phosphorylates a large number of substrates containing acidic residues C-terminal to the phosphorylated serine or threonine. Amplification-dependent oncogene; promotes cell proliferation and tumorigenesis by down-regulating expression of the tumor suppressor protein, PML. May play a role in the pathogenesis of the lung cancer development and progression. The sequence is that of Casein kinase II subunit alpha 3 (CSNK2A3) from Homo sapiens (Human).